A 270-amino-acid chain; its full sequence is Formamidopyrimidine-DNA glycosylase (270 aa).

Pro2 acts as the Schiff-base intermediate with DNA in catalysis. The Proton donor role is filled by Glu3. Residue Lys58 is the Proton donor; for beta-elimination activity of the active site. 3 residues coordinate DNA: His91, Arg109, and Arg151. Residues 236–270 (MVYNRQEEPCRLCGTPIRQIRQGQRSTYYCPLCQP) form an FPG-type zinc finger. Arg260 functions as the Proton donor; for delta-elimination activity in the catalytic mechanism.

Belongs to the FPG family. Monomer. It depends on Zn(2+) as a cofactor.

It catalyses the reaction Hydrolysis of DNA containing ring-opened 7-methylguanine residues, releasing 2,6-diamino-4-hydroxy-5-(N-methyl)formamidopyrimidine.. It carries out the reaction 2'-deoxyribonucleotide-(2'-deoxyribose 5'-phosphate)-2'-deoxyribonucleotide-DNA = a 3'-end 2'-deoxyribonucleotide-(2,3-dehydro-2,3-deoxyribose 5'-phosphate)-DNA + a 5'-end 5'-phospho-2'-deoxyribonucleoside-DNA + H(+). In terms of biological role, involved in base excision repair of DNA damaged by oxidation or by mutagenic agents. Acts as a DNA glycosylase that recognizes and removes damaged bases. Has a preference for oxidized purines, such as 7,8-dihydro-8-oxoguanine (8-oxoG). Has AP (apurinic/apyrimidinic) lyase activity and introduces nicks in the DNA strand. Cleaves the DNA backbone by beta-delta elimination to generate a single-strand break at the site of the removed base with both 3'- and 5'-phosphates. This Chromobacterium violaceum (strain ATCC 12472 / DSM 30191 / JCM 1249 / CCUG 213 / NBRC 12614 / NCIMB 9131 / NCTC 9757 / MK) protein is Formamidopyrimidine-DNA glycosylase.